A 156-amino-acid chain; its full sequence is Peroxisomal membrane associated protein 20 (156 aa).

One can recognise a Thioredoxin domain in the interval 2–156 (VAVGSTLPKV…SSADKVLSSL (155 aa)). C43 acts as the Cysteine sulfenic acid (-SOH) intermediate in catalysis.

The protein belongs to the peroxiredoxin family. Prx5 subfamily. Homodimer; disulfide-linked, upon oxidation.

It localises to the cytoplasm. The protein localises to the nucleus. Functionally, may act as a chaperone rather than a peroxidase. Has no thioredoxin-dependent peroxidase activity. Shows weak chaperone activity. The polypeptide is Peroxisomal membrane associated protein 20 (Schizosaccharomyces pombe (strain 972 / ATCC 24843) (Fission yeast)).